The primary structure comprises 187 residues: Small monomeric GTPase RhbA (187 aa).

GDP is bound by residues S17, V18, G19, K20, S21, S22, V33, and E34. S17 contacts GTP. G19, K20, S21, S22, and V33 together coordinate GTP. S21 is a binding site for Mg(2+). Y36, T39, N120, D123, and A152 together coordinate GTP. An Effector region motif is present at residues 36–44 (YYPTIENTF). T39 is a binding site for Mg(2+). 3 residues coordinate GDP: N120, D123, and A152. Residue C184 is the site of S-farnesyl cysteine attachment.

This sequence belongs to the small GTPase superfamily. Rheb family. Farnesylation is important for efficiently activating mTORC1-mediated signaling.

It localises to the cell membrane. It carries out the reaction GTP + H2O = GDP + phosphate + H(+). Its activity is regulated as follows. Alternates between an inactive form bound to GDP and an active form bound to GTP. In terms of biological role, small GTPase that acts as an allosteric activator of the canonical TOR pathway, an evolutionarily conserved central nutrient sensor that stimulates anabolic reactions and macromolecule biosynthesis to promote cellular biomass generation and growth. Plays a role in virulence. The chain is Small monomeric GTPase RhbA from Aspergillus fumigatus (strain ATCC MYA-4609 / CBS 101355 / FGSC A1100 / Af293) (Neosartorya fumigata).